Reading from the N-terminus, the 512-residue chain is Peroxisomal N(1)-acetyl-spermine/spermidine oxidase (512 aa).

Position 1 is an N-acetylmethionine (M1). The propeptide occupies 1–6; sequence MQSGGR. FAD-binding positions include A25, E46, R54, and 70 to 71; that span reads HW. Substrate-binding residues include H73 and V195. V248 lines the FAD pocket. N321 contacts substrate. FAD contacts are provided by residues E473 and 482–483; that span reads TT. Residues 510 to 512 carry the Microbody targeting signal motif; the sequence is PRL.

Belongs to the flavin monoamine oxidase family. Monomer. FAD serves as cofactor.

It localises to the peroxisome. The protein localises to the cytoplasm. The catalysed reaction is N(1)-acetylspermine + O2 + H2O = 3-acetamidopropanal + spermidine + H2O2. It catalyses the reaction N(1)-acetylspermidine + O2 + H2O = 3-acetamidopropanal + putrescine + H2O2. It carries out the reaction N(1),N(12)-diacetylspermine + O2 + H2O = 3-acetamidopropanal + N(1)-acetylspermidine + H2O2. The protein operates within amine and polyamine metabolism; spermine metabolism. In terms of biological role, flavoenzyme which catalyzes the oxidation of N(1)-acetylspermine to spermidine and is thus involved in the polyamine back-conversion. Can also oxidize N(1)-acetylspermidine to putrescine. Substrate specificity: N(1)-acetylspermine = N(1)-acetylspermidine &gt; N(1),N(12)-diacylspermine &gt;&gt; spermine. Does not oxidize spermidine. Plays an important role in the regulation of polyamine intracellular concentration. The chain is Peroxisomal N(1)-acetyl-spermine/spermidine oxidase (PAOX) from Bos taurus (Bovine).